Reading from the N-terminus, the 248-residue chain is Triosephosphate isomerase (248 aa).

A substrate-binding site is contributed by 9–11 (NWK). H94 functions as the Electrophile in the catalytic mechanism. E166 serves as the catalytic Proton acceptor. Substrate is bound by residues G172, S211, and 232–233 (GG).

Belongs to the triosephosphate isomerase family. Homodimer.

It localises to the cytoplasm. The catalysed reaction is D-glyceraldehyde 3-phosphate = dihydroxyacetone phosphate. The protein operates within carbohydrate biosynthesis; gluconeogenesis. Its pathway is carbohydrate degradation; glycolysis; D-glyceraldehyde 3-phosphate from glycerone phosphate: step 1/1. Its function is as follows. Involved in the gluconeogenesis. Catalyzes stereospecifically the conversion of dihydroxyacetone phosphate (DHAP) to D-glyceraldehyde-3-phosphate (G3P). This Herminiimonas arsenicoxydans protein is Triosephosphate isomerase.